Reading from the N-terminus, the 138-residue chain is Basic phospholipase A2 beta-bungarotoxin A-AL3 chain (138 aa).

The first 10 residues, 1 to 10 (LAVCVSLIGA), serve as a signal peptide directing secretion. Residues 11–18 (ANIPPQHL) constitute a propeptide that is removed on maturation. 6 disulfide bridges follow: cysteine 45–cysteine 137, cysteine 47–cysteine 63, cysteine 62–cysteine 118, cysteine 69–cysteine 111, cysteine 79–cysteine 104, and cysteine 97–cysteine 109. Ca(2+)-binding residues include tyrosine 46, glycine 48, and glycine 50. The active site involves histidine 66. Position 67 (aspartate 67) interacts with Ca(2+). Aspartate 112 is an active-site residue.

The protein belongs to the phospholipase A2 family. Group I subfamily. D49 sub-subfamily. Heterodimer; disulfide-linked. The A chains have phospholipase A2 activity and the B chains show homology with the basic protease inhibitors. Ca(2+) serves as cofactor. As to expression, expressed by the venom gland.

The protein resides in the secreted. It catalyses the reaction a 1,2-diacyl-sn-glycero-3-phosphocholine + H2O = a 1-acyl-sn-glycero-3-phosphocholine + a fatty acid + H(+). Functionally, snake venom phospholipase A2 (PLA2) that inhibits neuromuscular transmission by blocking acetylcholine release from the nerve termini. PLA2 catalyzes the calcium-dependent hydrolysis of the 2-acyl groups in 3-sn-phosphoglycerides. The chain is Basic phospholipase A2 beta-bungarotoxin A-AL3 chain from Bungarus multicinctus (Many-banded krait).